Here is a 343-residue protein sequence, read N- to C-terminus: Glyceraldehyde-3-phosphate dehydrogenase (343 aa).

NAD(+) is bound by residues Thr-13–Ile-14 and Gly-111. Position 140–142 (Ser-140–Asn-142) interacts with D-glyceraldehyde 3-phosphate. The Nucleophile role is filled by Cys-141. An NAD(+)-binding site is contributed by Arg-169. His-195 to Ala-196 is a binding site for D-glyceraldehyde 3-phosphate. Gln-303 serves as a coordination point for NAD(+).

This sequence belongs to the glyceraldehyde-3-phosphate dehydrogenase family. As to quaternary structure, homotetramer.

It localises to the cytoplasm. The catalysed reaction is D-glyceraldehyde 3-phosphate + phosphate + NADP(+) = (2R)-3-phospho-glyceroyl phosphate + NADPH + H(+). It catalyses the reaction D-glyceraldehyde 3-phosphate + phosphate + NAD(+) = (2R)-3-phospho-glyceroyl phosphate + NADH + H(+). It functions in the pathway carbohydrate degradation; glycolysis; pyruvate from D-glyceraldehyde 3-phosphate: step 1/5. This chain is Glyceraldehyde-3-phosphate dehydrogenase, found in Sulfurisphaera tokodaii (strain DSM 16993 / JCM 10545 / NBRC 100140 / 7) (Sulfolobus tokodaii).